A 999-amino-acid chain; its full sequence is Bifunctional glutamine synthetase adenylyltransferase/adenylyl-removing enzyme (999 aa).

The segment at 1–493 (MFVRKPATER…LHAKLFYQPL (493 aa)) is adenylyl removase. The adenylyl transferase stretch occupies residues 498 to 999 (GHTALGIGEG…KAVVRKIFGG (502 aa)).

It belongs to the GlnE family. The cofactor is Mg(2+).

The catalysed reaction is [glutamine synthetase]-O(4)-(5'-adenylyl)-L-tyrosine + phosphate = [glutamine synthetase]-L-tyrosine + ADP. It carries out the reaction [glutamine synthetase]-L-tyrosine + ATP = [glutamine synthetase]-O(4)-(5'-adenylyl)-L-tyrosine + diphosphate. Its function is as follows. Involved in the regulation of glutamine synthetase GlnA, a key enzyme in the process to assimilate ammonia. When cellular nitrogen levels are high, the C-terminal adenylyl transferase (AT) inactivates GlnA by covalent transfer of an adenylyl group from ATP to specific tyrosine residue of GlnA, thus reducing its activity. Conversely, when nitrogen levels are low, the N-terminal adenylyl removase (AR) activates GlnA by removing the adenylyl group by phosphorolysis, increasing its activity. The regulatory region of GlnE binds the signal transduction protein PII (GlnB) which indicates the nitrogen status of the cell. The protein is Bifunctional glutamine synthetase adenylyltransferase/adenylyl-removing enzyme of Mycolicibacterium smegmatis (strain ATCC 700084 / mc(2)155) (Mycobacterium smegmatis).